The chain runs to 206 residues: MSRTLVLVRHGQSEWNLKNLFTGWRDPGLTEQGHAEAKAAGQRLKAAGLKFDIAYTSALSRAQVTCQHILDQLGQSDLKTIRDQALNERDYGDLSGLNKDDARAKWGEEQVHIWRRSYDVPPPGGESLKDTGARVWPYYLHTVQPHVLRGETVLVAAHGNSLRALIMALDGLTPEQILKQELNTGVPVVYRLNADSTVASKEILEA.

Residues 9–16 (RHGQSEWN), 22–23 (TG), arginine 61, 88–91 (ERDY), lysine 99, 115–116 (RR), and 159–160 (GN) each bind substrate. Histidine 10 acts as the Tele-phosphohistidine intermediate in catalysis. Residue glutamate 88 is the Proton donor/acceptor of the active site.

This sequence belongs to the phosphoglycerate mutase family. BPG-dependent PGAM subfamily. In terms of assembly, homodimer.

It carries out the reaction (2R)-2-phosphoglycerate = (2R)-3-phosphoglycerate. It participates in carbohydrate degradation; glycolysis; pyruvate from D-glyceraldehyde 3-phosphate: step 3/5. Catalyzes the interconversion of 2-phosphoglycerate and 3-phosphoglycerate. This is 2,3-bisphosphoglycerate-dependent phosphoglycerate mutase from Brucella anthropi (strain ATCC 49188 / DSM 6882 / CCUG 24695 / JCM 21032 / LMG 3331 / NBRC 15819 / NCTC 12168 / Alc 37) (Ochrobactrum anthropi).